The chain runs to 354 residues: Chorismate synthase (354 aa).

Residue Arg-48 coordinates NADP(+). FMN is bound by residues 125–127 (RAS), Gly-277, 292–296 (KPIPS), and Arg-318.

It belongs to the chorismate synthase family. In terms of assembly, homotetramer. It depends on FMNH2 as a cofactor.

The catalysed reaction is 5-O-(1-carboxyvinyl)-3-phosphoshikimate = chorismate + phosphate. It participates in metabolic intermediate biosynthesis; chorismate biosynthesis; chorismate from D-erythrose 4-phosphate and phosphoenolpyruvate: step 7/7. Its function is as follows. Catalyzes the anti-1,4-elimination of the C-3 phosphate and the C-6 proR hydrogen from 5-enolpyruvylshikimate-3-phosphate (EPSP) to yield chorismate, which is the branch point compound that serves as the starting substrate for the three terminal pathways of aromatic amino acid biosynthesis. This reaction introduces a second double bond into the aromatic ring system. This chain is Chorismate synthase, found in Nitratidesulfovibrio vulgaris (strain ATCC 29579 / DSM 644 / CCUG 34227 / NCIMB 8303 / VKM B-1760 / Hildenborough) (Desulfovibrio vulgaris).